The sequence spans 106 residues: YcgL domain-containing protein HCH_02617 (106 aa).

A YcgL domain is found at 6 to 90; that stretch reads RLISIFRSSK…VQDDYMMDVV (85 aa).

This chain is YcgL domain-containing protein HCH_02617, found in Hahella chejuensis (strain KCTC 2396).